Here is a 595-residue protein sequence, read N- to C-terminus: Elongation factor 4 2 (595 aa).

The tr-type G domain maps to 4–187; sequence SHIRNFAIIA…AIKQRLPAPQ (184 aa). GTP contacts are provided by residues 16 to 21 and 133 to 136; these read DHGKST and NKVD.

Belongs to the TRAFAC class translation factor GTPase superfamily. Classic translation factor GTPase family. LepA subfamily.

Its subcellular location is the cell membrane. It catalyses the reaction GTP + H2O = GDP + phosphate + H(+). Functionally, required for accurate and efficient protein synthesis under certain stress conditions. May act as a fidelity factor of the translation reaction, by catalyzing a one-codon backward translocation of tRNAs on improperly translocated ribosomes. Back-translocation proceeds from a post-translocation (POST) complex to a pre-translocation (PRE) complex, thus giving elongation factor G a second chance to translocate the tRNAs correctly. Binds to ribosomes in a GTP-dependent manner. The protein is Elongation factor 4 2 of Lactiplantibacillus plantarum (strain ATCC BAA-793 / NCIMB 8826 / WCFS1) (Lactobacillus plantarum).